Here is a 432-residue protein sequence, read N- to C-terminus: Phosphomethylpyrimidine synthase (432 aa).

Residues Asn66, Met95, Tyr124, His163, Ser185–Gly187, Asp226–Arg229, and Glu265 each bind substrate. His269 is a Zn(2+) binding site. Tyr292 serves as a coordination point for substrate. His333 serves as a coordination point for Zn(2+). Cys409, Cys412, and Cys416 together coordinate [4Fe-4S] cluster.

The protein belongs to the ThiC family. [4Fe-4S] cluster serves as cofactor.

It carries out the reaction 5-amino-1-(5-phospho-beta-D-ribosyl)imidazole + S-adenosyl-L-methionine = 4-amino-2-methyl-5-(phosphooxymethyl)pyrimidine + CO + 5'-deoxyadenosine + formate + L-methionine + 3 H(+). Its pathway is cofactor biosynthesis; thiamine diphosphate biosynthesis. In terms of biological role, catalyzes the synthesis of the hydroxymethylpyrimidine phosphate (HMP-P) moiety of thiamine from aminoimidazole ribotide (AIR) in a radical S-adenosyl-L-methionine (SAM)-dependent reaction. This is Phosphomethylpyrimidine synthase from Thermoanaerobacter pseudethanolicus (strain ATCC 33223 / 39E) (Clostridium thermohydrosulfuricum).